The primary structure comprises 335 residues: Dihydroorotate dehydrogenase (quinone) (335 aa).

FMN is bound by residues 59–63 (AGADK) and Thr83. Lys63 lines the substrate pocket. A substrate-binding site is contributed by 108 to 112 (NRNGF). The FMN site is built by Asn136 and Asn169. Substrate is bound at residue Asn169. Ser172 acts as the Nucleophile in catalysis. Substrate is bound at residue Asn174. Positions 214 and 242 each coordinate FMN. 243–244 (NT) contributes to the substrate binding site. Residues Gly265, Gly294, and 315–316 (YS) each bind FMN.

The protein belongs to the dihydroorotate dehydrogenase family. Type 2 subfamily. Monomer. FMN serves as cofactor.

It localises to the cell membrane. The catalysed reaction is (S)-dihydroorotate + a quinone = orotate + a quinol. The protein operates within pyrimidine metabolism; UMP biosynthesis via de novo pathway; orotate from (S)-dihydroorotate (quinone route): step 1/1. Catalyzes the conversion of dihydroorotate to orotate with quinone as electron acceptor. The protein is Dihydroorotate dehydrogenase (quinone) of Glaesserella parasuis serovar 5 (strain SH0165) (Haemophilus parasuis).